The sequence spans 468 residues: N-acyl-phosphatidylethanolamine-hydrolyzing phospholipase D, mitochondrial (468 aa).

The transit peptide at 1 to 39 directs the protein to the mitochondrion; that stretch reads MNFVTCHVQMRLLLQRRLVRLRESELFRPQTSLSTFKRH. The chain crosses the membrane as a helical span at residues 54 to 76; it reads YARILLLSVLVPYTGYAFYVSLA. Residues His-265, His-267, Asp-269, His-270, His-332, and His-425 each coordinate Zn(2+).

It belongs to the NAPE-PLD family. Zn(2+) is required as a cofactor.

Its subcellular location is the mitochondrion membrane. The catalysed reaction is an N-acyl-1,2-diacyl-sn-glycero-3-phosphoethanolamine + H2O = an N-acylethanolamine + a 1,2-diacyl-sn-glycero-3-phosphate + H(+). Hydrolyzes N-acyl-phosphatidylethanolamines (NAPEs) to produce N-acylethanolamines (NAEs). In Saccharomyces cerevisiae (strain ATCC 204508 / S288c) (Baker's yeast), this protein is N-acyl-phosphatidylethanolamine-hydrolyzing phospholipase D, mitochondrial (FMP30).